A 117-amino-acid chain; its full sequence is UPF0127 protein PYRAB11210 (117 aa).

The protein belongs to the UPF0127 family.

This chain is UPF0127 protein PYRAB11210, found in Pyrococcus abyssi (strain GE5 / Orsay).